A 247-amino-acid chain; its full sequence is ATP synthase subunit a, chloroplastic (247 aa).

5 consecutive transmembrane segments (helical) span residues 38 to 58 (QVLITSWVVIAILLGSATIAV), 95 to 115 (VPFIGTMFLFIFVSNWSGALL), 134 to 154 (INTTVALALPTSMAYFYAGFT), 199 to 219 (LVVVVLVSLVPSVVPIPVMFL), and 220 to 240 (GLFTSGIQALIFATLAAAYIG).

It belongs to the ATPase A chain family. F-type ATPases have 2 components, CF(1) - the catalytic core - and CF(0) - the membrane proton channel. CF(1) has five subunits: alpha(3), beta(3), gamma(1), delta(1), epsilon(1). CF(0) has four main subunits: a, b, b' and c.

It is found in the plastid. Its subcellular location is the chloroplast thylakoid membrane. Key component of the proton channel; it plays a direct role in the translocation of protons across the membrane. This Liriodendron tulipifera (Tuliptree) protein is ATP synthase subunit a, chloroplastic.